We begin with the raw amino-acid sequence, 152 residues long: MQCPFCNHGELKVIDSRNAPEANAIKRRRECLNCGQRFTTFETVELTLQVLKRDGRYENFQESKLINGLNAASSHTRIGQDQVHAIASNVKSELLGKQNREISTKEIGELVMKYLKKADMIAYIRFACVYRRFKDVGELMEVLLSATPDMEK.

Residues 3–34 fold into a zinc finger; sequence CPFCNHGELKVIDSRNAPEANAIKRRRECLNC. The region spanning 48–138 is the ATP-cone domain; the sequence is LQVLKRDGRY…VYRRFKDVGE (91 aa).

The protein belongs to the NrdR family. Zn(2+) serves as cofactor.

In terms of biological role, negatively regulates transcription of bacterial ribonucleotide reductase nrd genes and operons by binding to NrdR-boxes. In Chlamydia abortus (strain DSM 27085 / S26/3) (Chlamydophila abortus), this protein is Transcriptional repressor NrdR.